Reading from the N-terminus, the 392-residue chain is Phosphoglycerate kinase (392 aa).

Substrate contacts are provided by residues 21–23 (DFN), arginine 36, 59–62 (HLGR), arginine 118, and arginine 151. Residues lysine 201, glycine 292, glutamate 323, and 349–352 (GGDS) contribute to the ATP site.

The protein belongs to the phosphoglycerate kinase family. As to quaternary structure, monomer.

It localises to the cytoplasm. The enzyme catalyses (2R)-3-phosphoglycerate + ATP = (2R)-3-phospho-glyceroyl phosphate + ADP. It functions in the pathway carbohydrate degradation; glycolysis; pyruvate from D-glyceraldehyde 3-phosphate: step 2/5. The sequence is that of Phosphoglycerate kinase from Borrelia hermsii (strain HS1 / DAH).